A 368-amino-acid chain; its full sequence is MIKIKKRKILLLPGDGIGPEVIQEVKKVILWLNSNKSLDFEIDEDLAGGCSYDKHGTPITDEVFYKALESEFVMLGAVGGPKWDNLEFSKKPERALLKLRKELKLFANLRPAICFEQLVDASTLKPEIVSGLDIMIVRELTGGIYFGEPRGIKPIENGERKGINTHSYTTSEIVRVAKVAFDLARKRSNRVTSCEKSNVMEAGQLWKEEVQELHDKEYKDVELSHMLADNCAMQLLKNPKQFDVIVTDNLFGDMLSDQASMLTGSLGLLPSASLGAKNKDGEMRAMYEPIHGSAPDIAGKEIANPIASILSFAMALRYSLDLDSEADALEKAVQDVLNDGLRTKDILSQGKKEVSTSAMGDAIISKLQ.

Gly80 to Glu93 lines the NAD(+) pocket. Substrate contacts are provided by Arg100, Arg110, Arg138, and Asp229. The Mg(2+) site is built by Asp229, Asp253, and Asp257. Position 292–304 (Gly292–Asn304) interacts with NAD(+).

This sequence belongs to the isocitrate and isopropylmalate dehydrogenases family. LeuB type 1 subfamily. As to quaternary structure, homodimer. Mg(2+) is required as a cofactor. It depends on Mn(2+) as a cofactor.

The protein localises to the cytoplasm. It catalyses the reaction (2R,3S)-3-isopropylmalate + NAD(+) = 4-methyl-2-oxopentanoate + CO2 + NADH. The protein operates within amino-acid biosynthesis; L-leucine biosynthesis; L-leucine from 3-methyl-2-oxobutanoate: step 3/4. In terms of biological role, catalyzes the oxidation of 3-carboxy-2-hydroxy-4-methylpentanoate (3-isopropylmalate) to 3-carboxy-4-methyl-2-oxopentanoate. The product decarboxylates to 4-methyl-2 oxopentanoate. The chain is 3-isopropylmalate dehydrogenase from Pelagibacter ubique (strain HTCC1062).